Reading from the N-terminus, the 138-residue chain is Protein PsiE homolog (138 aa).

The next 4 membrane-spanning stretches (helical) occupy residues 14–34 (LQAL…GLLI), 56–76 (YEML…ALII), 84–104 (HFPL…LIII), and 109–129 (AIST…FFIV).

It belongs to the PsiE family.

It is found in the cell membrane. This Bacillus velezensis (strain DSM 23117 / BGSC 10A6 / LMG 26770 / FZB42) (Bacillus amyloliquefaciens subsp. plantarum) protein is Protein PsiE homolog.